The primary structure comprises 312 residues: Pantothenate kinase (312 aa).

Residue 97–104 (GSVAVGKS) coordinates ATP.

It belongs to the prokaryotic pantothenate kinase family.

The protein resides in the cytoplasm. The catalysed reaction is (R)-pantothenate + ATP = (R)-4'-phosphopantothenate + ADP + H(+). Its pathway is cofactor biosynthesis; coenzyme A biosynthesis; CoA from (R)-pantothenate: step 1/5. In Mycolicibacterium smegmatis (strain ATCC 700084 / mc(2)155) (Mycobacterium smegmatis), this protein is Pantothenate kinase.